The primary structure comprises 536 residues: Arylsulfatase K (536 aa).

The signal sequence occupies residues 1-24 (MIQKCIALSLFLFSALPEDNIVRA). Residues D42 and C82 each contribute to the Ca(2+) site. C82 (nucleophile) is an active-site residue. A 3-oxoalanine (Cys) modification is found at C82. K130 provides a ligand contact to substrate. A glycan (N-linked (GlcNAc...) asparagine) is linked at N195. H253 is a substrate binding site. N264 carries an N-linked (GlcNAc...) asparagine glycan. Residues D315 and H316 each coordinate Ca(2+). 3 N-linked (GlcNAc...) asparagine glycosylation sites follow: N377, N416, and N501.

It belongs to the sulfatase family. The cofactor is Ca(2+). In terms of processing, the conversion to 3-oxoalanine (also known as C-formylglycine, FGly), of a serine or cysteine residue in prokaryotes and of a cysteine residue in eukaryotes, is critical for catalytic activity.

Its subcellular location is the secreted. The protein localises to the lysosome. It carries out the reaction an aryl sulfate + H2O = a phenol + sulfate + H(+). The enzyme catalyses Hydrolysis of the 2-sulfate groups of the 2-O-sulfo-D-glucuronate residues of chondroitin sulfate, heparin and heparitin sulfate.. In terms of biological role, catalyzes the hydrolysis of pseudosubstrates such as p-nitrocatechol sulfate and p-nitrophenyl sulfate. Catalyzes the hydrolysis of the 2-sulfate groups of the 2-O-sulfo-D-glucuronate residues of chondroitin sulfate, heparin and heparitin sulfate. Acts selectively on 2-sulfoglucuronate and lacks activity against 2-sulfoiduronate. This chain is Arylsulfatase K (arsk), found in Xenopus laevis (African clawed frog).